We begin with the raw amino-acid sequence, 457 residues long: PDZ and LIM domain protein 7 (457 aa).

In terms of domain architecture, PDZ spans 1 to 85 (MDSFKVVLEG…RLSLGLSRAQ (85 aa)). Serine 78 bears the Phosphoserine mark. Disordered stretches follow at residues 81–132 (LSRA…LSQN) and 186–226 (FMKK…PWAV). A Phosphothreonine modification is found at threonine 96. Arginine 103 is modified (asymmetric dimethylarginine). Serine 111 carries the post-translational modification Phosphoserine. Serine 247 carries the phosphoserine modification. LIM zinc-binding domains follow at residues 280–338 (PVCH…VRYA), 339–398 (PSCA…MFGT), and 399–457 (KCRG…FSHV).

In terms of assembly, binds via its LIM zinc-binding 3 domain (LIM 3) domain to endocytic codes of INSR, but not with those of IGF1R, LDLR, TFRC, or EGFR. Interacts with various PKC isoforms through the LIM zinc-binding domains. Binds to RET in a phosphorylation-independent manner via its LIM zinc-binding 2 domain (LIM 2). Probably part of a complex with SHC and the RET dimer. Interacts with TPM2, TBX4 and TBX5. Interacts (via LIM domains) with SIPA1L1. In terms of tissue distribution, expressed in kidney, heart, brain, lung, and skeletal muscle. Overexpression results in the synthesis of an unidentified soluble factor which acts on cells in the osteoblast lineage causing them to differentiate and secrete BMP-2.

The protein resides in the cytoplasm. Its subcellular location is the cytoskeleton. Its function is as follows. May function as a scaffold on which the coordinated assembly of proteins can occur. May play a role as an adapter that, via its PDZ domain, localizes LIM-binding proteins to actin filaments of both skeletal muscle and nonmuscle tissues. Involved in both of the two fundamental mechanisms of bone formation, direct bone formation (e.g. embryonic flat bones mandible and cranium), and endochondral bone formation (e.g. embryonic long bone development). Plays a role during fracture repair. Involved in BMP6 signaling pathway. This chain is PDZ and LIM domain protein 7 (Pdlim7), found in Rattus norvegicus (Rat).